The primary structure comprises 686 residues: DNA topoisomerase 1 (686 aa).

The region spanning 1-141 (MILIIAEKPN…KRMKFSALTK (141 aa)) is the Toprim domain. E7 and D107 together coordinate Mg(2+). A Topo IA-type catalytic domain is found at 156–574 (NFGMANAGIA…EAKERLTKIL (419 aa)). Positions 196-201 (STGRVQ) are interaction with DNA. The O-(5'-phospho-DNA)-tyrosine intermediate role is filled by Y317. Residues 606-634 (CPKCGGDLIVKYNKKTGKRFVGCSNWPKC) form a C4-type 1 zinc finger. A C4-type 2; atypical zinc finger spans residues 653-678 (CCNGAPVVIIREEDGREFEICLDINC).

It belongs to the type IA topoisomerase family. In terms of assembly, monomer. The cofactor is Mg(2+).

The catalysed reaction is ATP-independent breakage of single-stranded DNA, followed by passage and rejoining.. Releases the supercoiling and torsional tension of DNA, which is introduced during the DNA replication and transcription, by transiently cleaving and rejoining one strand of the DNA duplex. Introduces a single-strand break via transesterification at a target site in duplex DNA. The scissile phosphodiester is attacked by the catalytic tyrosine of the enzyme, resulting in the formation of a DNA-(5'-phosphotyrosyl)-enzyme intermediate and the expulsion of a 3'-OH DNA strand. The free DNA strand then undergoes passage around the unbroken strand, thus removing DNA supercoils. Finally, in the religation step, the DNA 3'-OH attacks the covalent intermediate to expel the active-site tyrosine and restore the DNA phosphodiester backbone. This Pyrococcus horikoshii (strain ATCC 700860 / DSM 12428 / JCM 9974 / NBRC 100139 / OT-3) protein is DNA topoisomerase 1.